We begin with the raw amino-acid sequence, 390 residues long: Phosphopentomutase (390 aa).

Mn(2+)-binding residues include aspartate 11, aspartate 283, histidine 288, aspartate 324, histidine 325, and histidine 336.

It belongs to the phosphopentomutase family. It depends on Mn(2+) as a cofactor.

The protein localises to the cytoplasm. The catalysed reaction is 2-deoxy-alpha-D-ribose 1-phosphate = 2-deoxy-D-ribose 5-phosphate. It catalyses the reaction alpha-D-ribose 1-phosphate = D-ribose 5-phosphate. The protein operates within carbohydrate degradation; 2-deoxy-D-ribose 1-phosphate degradation; D-glyceraldehyde 3-phosphate and acetaldehyde from 2-deoxy-alpha-D-ribose 1-phosphate: step 1/2. Isomerase that catalyzes the conversion of deoxy-ribose 1-phosphate (dRib-1-P) and ribose 1-phosphate (Rib-1-P) to deoxy-ribose 5-phosphate (dRib-5-P) and ribose 5-phosphate (Rib-5-P), respectively. The protein is Phosphopentomutase of Clostridium novyi (strain NT).